A 693-amino-acid chain; its full sequence is Elongation factor G (693 aa).

The region spanning 8 to 283 (NKVRNFGIAA…AVCDYLPSPL (276 aa)) is the tr-type G domain. GTP contacts are provided by residues 17-24 (AHIDAGKT), 81-85 (DTPGH), and 135-138 (NKMD).

This sequence belongs to the TRAFAC class translation factor GTPase superfamily. Classic translation factor GTPase family. EF-G/EF-2 subfamily.

It is found in the cytoplasm. Its function is as follows. Catalyzes the GTP-dependent ribosomal translocation step during translation elongation. During this step, the ribosome changes from the pre-translocational (PRE) to the post-translocational (POST) state as the newly formed A-site-bound peptidyl-tRNA and P-site-bound deacylated tRNA move to the P and E sites, respectively. Catalyzes the coordinated movement of the two tRNA molecules, the mRNA and conformational changes in the ribosome. The polypeptide is Elongation factor G (Endomicrobium trichonymphae).